A 213-amino-acid polypeptide reads, in one-letter code: Small ribosomal subunit protein uS3c (213 aa).

The KH type-2 domain occupies 39–109; it reads IRKYLNAKLA…KFRITITYLQ (71 aa).

Belongs to the universal ribosomal protein uS3 family. In terms of assembly, part of the 30S ribosomal subunit.

The protein resides in the plastid. The protein localises to the chloroplast. The sequence is that of Small ribosomal subunit protein uS3c (rps3) from Mesostigma viride (Green alga).